We begin with the raw amino-acid sequence, 554 residues long: Sesquiterpene synthase 14a (554 aa).

Residues Asp-305, Asp-309, Asp-449, and Glu-457 each contribute to the Mg(2+) site. The DDXXD motif motif lies at 305-309 (DDLYD).

The protein belongs to the terpene synthase family. Tpsa subfamily. The cofactor is Mg(2+). Requires Mn(2+) as cofactor. In terms of tissue distribution, mostly expressed in stem trichomes.

It catalyses the reaction (2E,6E)-farnesyl diphosphate = beta-bisabolene + diphosphate. It carries out the reaction (2E,6E)-farnesyl diphosphate = (Z)-alpha-bisabolene + diphosphate. The enzyme catalyses (2E,6E)-farnesyl diphosphate = beta-acoradiene + diphosphate. The catalysed reaction is (2E,6E)-farnesyl diphosphate = (E)-gamma-bisabolene + diphosphate. It catalyses the reaction (2E,6E)-farnesyl diphosphate = (E)-beta-farnesene + diphosphate. It carries out the reaction (2E,6E)-farnesyl diphosphate = (Z)-beta-farnesene + diphosphate. The enzyme catalyses (2E)-geranyl diphosphate = limonene + diphosphate. The catalysed reaction is (2E)-geranyl diphosphate = beta-myrcene + diphosphate. It participates in secondary metabolite biosynthesis; terpenoid biosynthesis. Its function is as follows. Sesquiterpene synthase involved in the biosynthesis of volatile compounds. Mediates the conversion of (2E,6E)-farnesyl diphosphate ((EE)-FPP) into beta-bisabolene, beta-farnesene, (E)-gamma-bisabolene, beta-acoradiene, selinene and (Z)-alpha-bisabolene. Low or no activity with (2Z,6Z)-farnesyl diphosphate ((ZZ)-FPP). Can act with a low efficiency as a monoterpene synthase with geranyl diphosphate (GPP) as substrate, thus producing beta-myrcene and limonene. In Solanum habrochaites (Wild tomato), this protein is Sesquiterpene synthase 14a.